We begin with the raw amino-acid sequence, 238 residues long: uncharacterized protein (238 aa).

The protein belongs to the HyuE racemase family.

This is an uncharacterized protein from Schizosaccharomyces pombe (strain 972 / ATCC 24843) (Fission yeast).